The chain runs to 847 residues: MVDAVTGFVLNKIGGYLINEVLALMGVKDDLEELKTELTCIHGYLKDVEAREREDEVSKEWTKLVLDIAYDIEDVLDTYFLKLEERSLRRGLLRLTNKIGKKRDAYNIVEDIRTLKRRILDITRKRETFGIGSFNEPRGENITNVRVRQLRRAPPVDQEELVVGLEDDVKILLVKLLSDNEKDKSYIISIFGMGGLGKTALARKLYNSGDVKRRFDCRAWTYVSQEYKTRDILIRIIRSLGIVSAEEMEKIKMFEEDEELEVYLYGLLEGKNYMVVVDDVWDPDAWESLKRALPCDHRGSKVIITTRIRAIAEGVEGTVYAHKLRFLTFEESWTLFERKAFSNIEKVDEDLQRTGKEMVKKCGGLPLAIVVLSGLLSRKRTNEWHEVCASLWRRLKDNSIHISTVFDLSFKEMRHELKLCFLYFSVFPEDYEIKVEKLIHLLVAEGFIQEDEEMMMEDVARCYIDELVDRSLVKAERIERGKVMSCRIHDLLRDLAIKKAKELNFVNVYNEKQHSSDICRREVVHHLMNDYYLCDRRVNKRMRSFLFIGERRGFGYVNTTNLKLKLLRVLNMEGLLFVSKNISNTLPDVIGELIHLRYLGIADTYVSILPASISNLRFLQTLDASGNDPFQYTTDLSKLTSLRHVIGKFVGECLIGEGVNLQTLRSISSYSWSKLNHELLRNLQDLEIYDHSKWVDQRRVPLNFVSFSKPKNLRVLKLEMRNFKLSSESRTTIGLVDVNFPSLESLTLVGTTLEENSMPALQKLPRLEDLVLKDCNYSGVKIMSISAQGFGRLKNLEMSMERRGHGLDELRIEEEAMPSLIKLTVKGRLELTKLMIPDRLKAFVRRN.

A coiled-coil region spans residues 24-41 (LMGVKDDLEELKTELTCI). The 311-residue stretch at 143 to 453 (TNVRVRQLRR…AEGFIQEDEE (311 aa)) folds into the NB-ARC domain. An ATP-binding site is contributed by 192-199 (GMGGLGKT).

It belongs to the disease resistance NB-LRR family. RPP13 subfamily.

Potential disease resistance protein. In Arabidopsis thaliana (Mouse-ear cress), this protein is Putative disease resistance RPP13-like protein 3 (RPP13L3).